The sequence spans 305 residues: Pseudomurein endoisopeptidase (305 aa).

4 pseudomurein-binding repeat regions span residues 3 to 34, 39 to 70, 87 to 116, and 121 to 152; these read SNSV…VIFI, GESI…IVYV, YVSI…VVFI, and GPSV…IVYV. Residues C213, H248, and D272 contribute to the active site.

Belongs to the Psimunavirus Pseudomurein endoisopeptidase family. In terms of assembly, monomer. Ca(2+) is required as a cofactor.

Its function is as follows. Cysteine protease that cleaves the cell wall of its host methanogen under hydrogen limitation of the latter (autolysis). Cleaves the epsilon-Ala-Lys isopeptide bond in the oligopeptides of pseudomurein. This Methanobacterium phage psiM2 (PsiM2) protein is Pseudomurein endoisopeptidase (peiP).